The primary structure comprises 1018 residues: D-2-hydroxyglutarate dehydrogenase (1018 aa).

The region spanning 48–281 (YQLLPDAVVF…TEARLDITRL (234 aa)) is the FAD-binding PCMH-type domain. (R)-2-hydroxyglutarate is bound by residues Arg402 and His500. The region spanning 662 to 695 (FSHEVKEAMSGCLACKACSTQCPIKIDVPEFRSR) is the 4Fe-4S ferredoxin-type domain. Residues Cys673, Cys676, Cys679, and Cys683 each contribute to the [4Fe-4S] cluster site.

It in the N-terminal section; belongs to the FAD-binding oxidoreductase/transferase type 4 family. Homotetramer. [4Fe-4S] cluster serves as cofactor. FAD is required as a cofactor.

It carries out the reaction (R)-2-hydroxyglutarate + A = 2-oxoglutarate + AH2. With respect to regulation, activity is completely inhibited by the addition of 0.5 mM Mn(2+), Ni(2+), or Co(2+) and partially inhibited by 0.5 mM Zn(2+). Catalyzes the oxidation of D-2-hydroxyglutarate (D-2-HGA) to 2-oxoglutarate. Appears to be the only D2HGDH in E.coli, providing the way to recycle D-2-HGA produced during L-serine synthesis by SerA, by converting it back to 2-oxoglutarate. The physiological molecule that functions as the primary electron acceptor during D-2-HGA oxidation by YdiJ in E.coli is unknown. Shows strict substrate specificity towards D-2-HGA, since it has no detectable activity on L-2-hydroxyglutarate, L-malate, D-malate, L-lactate, D-lactate, L-tartrate, D-tartrate, L-glycerate, D-glycerate, glutarate, or pyruvate. This chain is D-2-hydroxyglutarate dehydrogenase (ydiJ), found in Escherichia coli (strain K12).